The chain runs to 570 residues: Sulfite reductase [NADPH] hemoprotein beta-component (570 aa).

Residues C433, C439, C478, and C482 each coordinate [4Fe-4S] cluster. C482 is a siroheme binding site.

It belongs to the nitrite and sulfite reductase 4Fe-4S domain family. In terms of assembly, alpha(8)-beta(8). The alpha component is a flavoprotein, the beta component is a hemoprotein. It depends on siroheme as a cofactor. Requires [4Fe-4S] cluster as cofactor.

The enzyme catalyses hydrogen sulfide + 3 NADP(+) + 3 H2O = sulfite + 3 NADPH + 4 H(+). Its pathway is sulfur metabolism; hydrogen sulfide biosynthesis; hydrogen sulfide from sulfite (NADPH route): step 1/1. Its function is as follows. Component of the sulfite reductase complex that catalyzes the 6-electron reduction of sulfite to sulfide. This is one of several activities required for the biosynthesis of L-cysteine from sulfate. In Aeromonas hydrophila subsp. hydrophila (strain ATCC 7966 / DSM 30187 / BCRC 13018 / CCUG 14551 / JCM 1027 / KCTC 2358 / NCIMB 9240 / NCTC 8049), this protein is Sulfite reductase [NADPH] hemoprotein beta-component.